We begin with the raw amino-acid sequence, 204 residues long: MSELLDERTMAFAGILQAIGQVQHIARHGNSDNDSLAASLNTVLVTNPDSTSDVYADKTALNKGYQLIVNQLGDSKDKDVEITRYLVGILALERKLSRGNAMGLLAERINQVHRQLHHFSITDEQVIANFAGIYSDVISTLGPKIQISGNPEFLKQNQVQEKIRALLLSAMRSAVLWRQLGGKRRHLVFARKSILDIANKSLTL.

It belongs to the HflD family.

The protein resides in the cytoplasm. The protein localises to the cell inner membrane. This is High frequency lysogenization protein HflD homolog from Shewanella woodyi (strain ATCC 51908 / MS32).